We begin with the raw amino-acid sequence, 397 residues long: UDP-GlcNAc:betaGal beta-1,3-N-acetylglucosaminyltransferase 7 (397 aa).

At 1–6 (MSLWKK) the chain is on the cytoplasmic side. A helical; Signal-anchor for type II membrane protein transmembrane segment spans residues 7 to 26 (TLYKSVCLALALLVAVTVFQ). The Lumenal segment spans residues 27–397 (RSVTPGQFLQ…LTCSLKFQVL (371 aa)). N-linked (GlcNAc...) asparagine glycosylation is found at Asn-84, Asn-90, Asn-210, and Asn-387.

It belongs to the glycosyltransferase 31 family.

The protein localises to the golgi apparatus membrane. Its pathway is protein modification; protein glycosylation. N-acetyl glucosamine (GlcNAc) transferase that catalyzes the transfer of GlcNAc via a beta1-&gt;3 linkage from UDP-GlcNAc to the non-reducing terminal galactose (Gal) in the linearly growing chain of N- and O-linked keratan sulfate proteoglycans. Cooperates with B4GALT4 galactosyltransferase and CHST6 and CHST1 sulfotransferases to construct and elongate mono- and disulfated disaccharide units [-&gt;3Galbeta1-&gt;4(6-sulfoGlcNAcbeta)1-&gt;] and [-&gt;3(6-sulfoGalbeta)1-&gt;4(6-sulfoGlcNAcbeta)1-&gt;] within keratan sulfate polymer. Involved in biosynthesis of N-linked keratan sulfate proteoglycans in cornea, with an impact on proteoglycan fibril organization and corneal transparency. May play a role in the maintenance of tissue architecture by suppressing cellular motility and invasion. The chain is UDP-GlcNAc:betaGal beta-1,3-N-acetylglucosaminyltransferase 7 (B3gnt7) from Rattus norvegicus (Rat).